We begin with the raw amino-acid sequence, 870 residues long: Rho GTPase-activating protein 7 (870 aa).

One can recognise a PH domain in the interval 18–125 (TVFKSGPLFI…WKTALEQALA (108 aa)). In terms of domain architecture, Rho-GAP spans 167–367 (LALEDIDGSP…VLLEDYGSIF (201 aa)). 2 disordered regions span residues 378 to 432 (STES…SGCT) and 446 to 465 (DSDI…SNIR). Residues 407–417 (NEVEPVTDDDN) are compositionally biased toward acidic residues. Positions 569-693 (GEDELAIQRL…HQLNQQRQTH (125 aa)) form a coiled coil. The segment at 736-793 (HEENVLGAEWRNSKGAGSFGVGNSRQPSRKQIPESTNTTDSKISEESGKISVDKLSSI) is disordered. Residues 777-787 (KISEESGKISV) are compositionally biased toward basic and acidic residues.

Its function is as follows. Acts as a GTPase activator for the Rac-type GTPase by converting it to an inactive GDP-bound state. In Arabidopsis thaliana (Mouse-ear cress), this protein is Rho GTPase-activating protein 7 (ROPGAP7).